The chain runs to 399 residues: Elongation factor Tu (399 aa).

The tr-type G domain occupies 10–207; the sequence is KPHMNVGTIG…AMDTYFPDPV (198 aa). The segment at 19–26 is G1; it reads GQIDHGKT. 19–26 is a GTP binding site; it reads GQIDHGKT. A Mg(2+)-binding site is contributed by Thr26. A G2 region spans residues 60-64; it reads GITIN. The interval 81 to 84 is G3; that stretch reads DCPG. GTP-binding positions include 81–85 and 136–139; these read DCPGH and NKVD. Positions 136-139 are G4; it reads NKVD. The interval 173–175 is G5; the sequence is SAL.

It belongs to the TRAFAC class translation factor GTPase superfamily. Classic translation factor GTPase family. EF-Tu/EF-1A subfamily. In terms of assembly, monomer.

It localises to the cytoplasm. The catalysed reaction is GTP + H2O = GDP + phosphate + H(+). In terms of biological role, GTP hydrolase that promotes the GTP-dependent binding of aminoacyl-tRNA to the A-site of ribosomes during protein biosynthesis. This chain is Elongation factor Tu, found in Fervidobacterium islandicum.